Here is a 1877-residue protein sequence, read N- to C-terminus: Protein TIC 214 (1877 aa).

A run of 6 helical transmembrane segments spans residues 18 to 38 (IINSVVMVGLYYGFLTTFSIG), 67 to 87 (FIAGQLMMFISIYYAPLHLAL), 90 to 110 (PHTITVLALPYLLFHFFWNNH), 127 to 147 (LSIQCVFLNNLIFQLFNHFIL), 175 to 195 (VGWLIGHIFFMKWVELVLVWI), and 224 to 244 (IFSILLFITCVYYLGRIPSPI). Residues 249–258 (FKETSETEER) are compositionally biased toward basic and acidic residues. A disordered region spans residues 249–308 (FKETSETEERGEGEEETDVEIETTFETKGTRQEQEGSTEEDPSLFSEEKEDPDKIDEREE). 2 stretches are compositionally biased toward acidic residues: residues 259–271 (GEGEEETDVEIET) and 284–298 (GSTEEDPSLFSEEKE). Basic and acidic residues predominate over residues 299–308 (DPDKIDEREE).

Belongs to the TIC214 family. In terms of assembly, part of the Tic complex.

It is found in the plastid. The protein resides in the chloroplast inner membrane. Its function is as follows. Involved in protein precursor import into chloroplasts. May be part of an intermediate translocation complex acting as a protein-conducting channel at the inner envelope. This is Protein TIC 214 from Eucalyptus globulus subsp. globulus (Tasmanian blue gum).